The chain runs to 290 residues: Ras-like protein 1 (290 aa).

Position 11–18 (glycine 11–serine 18) interacts with GTP. Residues tyrosine 33–tyrosine 41 carry the Effector region motif. GTP-binding positions include aspartate 58–glutamine 62 and asparagine 117–aspartate 120. The disordered stretch occupies residues glutamate 176–valine 290. 2 stretches are compositionally biased toward low complexity: residues glutamine 178–asparagine 216 and proline 246–lysine 283. A lipid anchor (S-palmitoyl cysteine) is attached at cysteine 286. Cysteine methyl ester is present on cysteine 287. Cysteine 287 carries S-farnesyl cysteine lipidation. A propeptide spans valine 288–valine 290 (removed in mature form).

It belongs to the small GTPase superfamily. Ras family.

The protein resides in the cell membrane. With respect to regulation, alternates between an inactive form bound to GDP and an active form bound to GTP. Activated by a guanine nucleotide-exchange factor (GEF) and inactivated by a GTPase-activating protein (GAP). In terms of biological role, required for the regulation of both a MAP kinase signaling pathway and a cAMP signaling pathway. The activation of these pathways contributes to the pathogenicity of the cells through the induction of the morphological transition from the yeast to the polarized filamentous form. This Candida albicans (strain SC5314 / ATCC MYA-2876) (Yeast) protein is Ras-like protein 1 (RAS1).